The chain runs to 334 residues: G-protein coupled receptor 12 (334 aa).

The Extracellular portion of the chain corresponds to 1–48; sequence MNEDPKVNLSGLPRDCIDAGAPENISAAVPSQGSVAESEPELVVNPWD. N-linked (GlcNAc...) asparagine glycosylation is found at asparagine 8 and asparagine 24. A helical membrane pass occupies residues 49-69; that stretch reads IVLCSSGTLICCENAVVVLII. The Cytoplasmic segment spans residues 70–78; the sequence is FHSPSLRAP. Residues 79 to 99 traverse the membrane as a helical segment; it reads MFLLIGSLALADLLAGLGLII. Residues 100–113 are Extracellular-facing; it reads NFVFAYLLQSEATK. Residues 114-134 form a helical membrane-spanning segment; sequence LVTIGLIVASFSASVCSLLAI. Topologically, residues 135–158 are cytoplasmic; that stretch reads TVDRYLSLYYALTYHSERTVTFTY. The chain crosses the membrane as a helical span at residues 159 to 179; sequence VMLVMLWGTSICLGLLPVMGW. Over 180–199 the chain is Extracellular; the sequence is NCLRDESTCSVVRPLTKNNA. Residues 200–220 form a helical membrane-spanning segment; that stretch reads AILSISFLFMFALMLQLYIQI. The Cytoplasmic portion of the chain corresponds to 221–252; that stretch reads CKIVMRHAHQIALQHHFLATSHYVTTRKGVST. A helical membrane pass occupies residues 253–273; it reads LALILGTFAACWMPFTLYSLI. At 274-282 the chain is on the extracellular side; sequence ADYTYPSIY. A helical transmembrane segment spans residues 283–303; the sequence is TYATLLPATYNSIINPVIYAF. Topologically, residues 304-334 are cytoplasmic; that stretch reads RNQEIQKALCLICCGCIPSSLSQRARSPSDV. Cysteine 317 carries S-palmitoyl cysteine lipidation. A phosphoserine mark is found at serine 330 and serine 332.

It belongs to the G-protein coupled receptor 1 family. In terms of tissue distribution, expressed predominantly in the forebrain and a lesser extent in the hindbrain. Lower expression in the liver.

The protein resides in the cell membrane. Receptor with constitutive G(s) signaling activity that stimulates cyclic AMP production. Promotes neurite outgrowth and blocks myelin inhibition in neurons. This is G-protein coupled receptor 12 (Gpr12) from Mus musculus (Mouse).